A 341-amino-acid polypeptide reads, in one-letter code: Peroxisomal membrane protein import receptor PEX19 (341 aa).

Residues 1–18 show a composition bias toward acidic residues; that stretch reads MNENEYDNFDDLDDLLDE. 5 disordered regions span residues 1–26, 39–66, 109–141, 293–312, and 318–341; these read MNENEYDNFDDLDDLLDEDPTKLDEQ, DSENKEKNAESKDSDGVQVANESEEDPE, VPRQQMEQGSSSLKSNSTDKGTLNGSNPGFKNI, LGDSPIRSANSPLKHGNEEE, and LEIDGNDPNLGNLDKELTDGCKQQ. Over residues 39–53 the composition is skewed to basic and acidic residues; the sequence is DSENKEKNAESKDSD. Phosphoserine is present on Ser-61. Residues 113–141 show a composition bias toward polar residues; the sequence is QMEQGSSSLKSNSTDKGTLNGSNPGFKNI. Ser-303 is subject to Phosphoserine. Basic and acidic residues predominate over residues 330–341; it reads LDKELTDGCKQQ. Cys-338 is modified (cysteine methyl ester). Residue Cys-338 is the site of S-farnesyl cysteine attachment. Positions 339-341 are cleaved as a propeptide — removed in mature form; it reads KQQ.

It belongs to the peroxin-19 family. Interacts (farnesylated) with PEX3; farnesylation is required for this interaction. Interacts with PEX2, PEX5, PEX10, PEX11, PEX12, PEX13, PEX14, PEX17, PEX22, PEX25, PEX30 and PEX32; the interaction requires well-defined PEX19-binding sites within the peroxisomal membrane protein targeting signal (mPTS) of the PMPs and is independent on the presence of PEX3. Interacts with VPS1.

Its subcellular location is the cytoplasm. The protein localises to the peroxisome membrane. The protein resides in the endoplasmic reticulum membrane. Functionally, required for proper post-translational import and stabilization of peroxisomal membrane proteins (PMPs). Acts as a cytosolic import receptor for PMPs and delivers them to the docking factor PEX3 at the peroxisomal membrane for subsequent insertion into the membrane. Acts as a chaperone in stabilizing or maintaining PMPs in the lipid bilayer. Directs PEX17, a peripheral component of the peroxisomal matrix protein translocation machinery, to peroxisomes. Stabilizes VPS1, a protein required for peroxisomal fission, at the peroxisomal membrane. Also acts in conjunction with PEX3 in the formation of peroxisomes from preperoxisomal compartments at the endoplasmic reticulum during de novo peroxisome synthesis, probably via the import of additional PMPs. In Saccharomyces cerevisiae (strain YJM789) (Baker's yeast), this protein is Peroxisomal membrane protein import receptor PEX19 (PEX19).